A 61-amino-acid chain; its full sequence is Metallothionein-1B (61 aa).

The tract at residues 1–29 is beta; it reads MDPNCSCVAGESCTCAGSCKCKQCRCASC. A divalent metal cation is bound by residues Cys5, Cys7, Cys13, Cys15, Cys19, Cys21, Cys24, Cys26, Cys29, Cys33, Cys34, Cys36, Cys37, Cys41, Cys44, Cys48, Cys50, Cys57, Cys59, and Cys60. The tract at residues 30 to 61 is alpha; that stretch reads KKSCCSCCPVGCAKCAQGCVCKGASDKCSCCA.

It belongs to the metallothionein superfamily. Type 1 family.

In terms of biological role, metallothioneins have a high content of cysteine residues that bind various heavy metals; these proteins are transcriptionally regulated by both heavy metals and glucocorticoids. The polypeptide is Metallothionein-1B (Equus caballus (Horse)).